Here is a 388-residue protein sequence, read N- to C-terminus: Putative 8-amino-7-oxononanoate synthase (388 aa).

Position 23 (Arg-23) interacts with substrate. 110–111 (GY) is a binding site for pyridoxal 5'-phosphate. His-135 contacts substrate. Pyridoxal 5'-phosphate contacts are provided by residues Ser-182, 207–210 (DDAH), and 238–241 (TLSK). Lys-241 is subject to N6-(pyridoxal phosphate)lysine. Thr-355 contributes to the substrate binding site.

It belongs to the class-II pyridoxal-phosphate-dependent aminotransferase family. BioF subfamily. As to quaternary structure, homodimer. It depends on pyridoxal 5'-phosphate as a cofactor.

It catalyses the reaction 6-carboxyhexanoyl-[ACP] + L-alanine + H(+) = (8S)-8-amino-7-oxononanoate + holo-[ACP] + CO2. Its pathway is cofactor biosynthesis; biotin biosynthesis. In terms of biological role, catalyzes the decarboxylative condensation of pimeloyl-[acyl-carrier protein] and L-alanine to produce 8-amino-7-oxononanoate (AON), [acyl-carrier protein], and carbon dioxide. In Thermodesulfovibrio yellowstonii (strain ATCC 51303 / DSM 11347 / YP87), this protein is Putative 8-amino-7-oxononanoate synthase (bioF).